Consider the following 285-residue polypeptide: Heme oxygenase 3, chloroplastic (285 aa).

The N-terminal 58 residues, Met1–Thr58, are a transit peptide targeting the chloroplast. His89 contributes to the heme b binding site. Residues His89–Glu105 are compositionally biased toward basic and acidic residues. Residues His89–Val109 form a disordered region.

It belongs to the heme oxygenase family. Widely expressed at low levels.

It localises to the plastid. The protein resides in the chloroplast. The enzyme catalyses heme b + 3 reduced [NADPH--hemoprotein reductase] + 3 O2 = biliverdin IXalpha + CO + Fe(2+) + 3 oxidized [NADPH--hemoprotein reductase] + 3 H2O + H(+). Catalyzes the opening of the heme ring to form the open-chain tetrapyrrole biliverdin IX with the release of iron and carbon monoxide (CO). Produces specifically the biliverdin IX-alpha isomer. Plays a minor role in phytochrome assembly and photomorphogenesis. This chain is Heme oxygenase 3, chloroplastic (HO3), found in Arabidopsis thaliana (Mouse-ear cress).